The primary structure comprises 1671 residues: DENN domain-containing protein Crag (1671 aa).

The region spanning 39–195 (IEPITDIGVY…DVYLCYKKSM (157 aa)) is the MABP domain. One can recognise a uDENN domain in the interval 187-364 (VYLCYKKSMY…DEVPFPAPSI (178 aa)). The 137-residue stretch at 385 to 521 (PLPRSGAGFH…AARLLRQTLT (137 aa)) folds into the cDENN domain. The dDENN domain maps to 523-632 (LENAKPISYD…ERSFVSDGDH (110 aa)). 3 disordered regions span residues 997-1160 (QQQQ…PVAS), 1245-1311 (ANST…RLSE), and 1415-1435 (VEES…ANGN). Acidic residues-rich tracts occupy residues 1011–1023 (GDDD…EDEY) and 1050–1061 (YEADEEDEDEVD). Polar residues predominate over residues 1072–1089 (RVQSPTKISPRTPVTQND). Positions 1100–1119 (AASATPTQETQQEQQHSQSQ) are enriched in low complexity. Residues 1136 to 1147 (RSATFDESTQIG) show a composition bias toward polar residues. Over residues 1254 to 1277 (NGHHPHGLHHGHHHPHHHHHHHSQ) the composition is skewed to basic residues. Over residues 1281–1301 (AEQEEHDAAVHEEGKLRRVSS) the composition is skewed to basic and acidic residues.

Interacts with Cam. Interacts with Rab10. Interacts (via the DENN domains) with Rab11. Expressed in the adult head and body.

It is found in the cytoplasm. It localises to the cell cortex. The protein resides in the early endosome. Its subcellular location is the recycling endosome. The protein localises to the cytoplasmic granule. Calmodulin-binding protein that acts as a guanine exchange factor for Rab10 and Rab11. Essential for maintenance of adult photoreceptor cells. Upon light stimulation, required for trafficking of newly synthesized ninaE (Rh1) from the trans-Golgi network to rhabdomere membranes via Rab11-dependent vesicular transport. During egg development, essential for establishing and maintaining epithelial cell polarity by regulating the correct polarized deposition of basal membrane (BM) proteins in follicular epithelial (FE) cells. Functions by targeting Rab10 to the basal cytoplasm, where it restricts the secretion of BM proteins such as trol/Pcan and vkg/Coll IV to the basal surface. Appears to be involved in regulating the levels and distribution of the guanine nucleotide exchange factor strat, however the two proteins appear to have independent roles in regulating polarized BM protein secretion in the FE. This is DENN domain-containing protein Crag from Drosophila melanogaster (Fruit fly).